Reading from the N-terminus, the 283-residue chain is Undecaprenyl-diphosphatase (283 aa).

The next 7 helical transmembrane spans lie at 46–66 (PGVS…IAYF), 95–115 (VAMV…KFFW), 127–147 (VPSI…AECM), 154–174 (LGGV…LAVI), 200–220 (FSFL…LKSA), 227–247 (AGPL…WLAI), and 259–279 (TWIF…WWAF).

Belongs to the UppP family.

The protein localises to the cell inner membrane. It carries out the reaction di-trans,octa-cis-undecaprenyl diphosphate + H2O = di-trans,octa-cis-undecaprenyl phosphate + phosphate + H(+). Catalyzes the dephosphorylation of undecaprenyl diphosphate (UPP). Confers resistance to bacitracin. This chain is Undecaprenyl-diphosphatase, found in Synechococcus sp. (strain CC9902).